The primary structure comprises 295 residues: Protoheme IX farnesyltransferase (295 aa).

Helical transmembrane passes span 9 to 29 (ITKP…FFLA), 36 to 56 (FGVF…GCVF), 80 to 100 (LVSL…GVAL), 108 to 128 (LAAL…SLYL), 135 to 155 (GTLV…CAVT), 163 to 183 (LTLL…IAIF), 209 to 229 (IMLY…GGYA), 230 to 250 (GLNY…MAWK), and 265 to 285 (FVFS…DFQV).

It belongs to the UbiA prenyltransferase family. Protoheme IX farnesyltransferase subfamily.

Its subcellular location is the cell inner membrane. It carries out the reaction heme b + (2E,6E)-farnesyl diphosphate + H2O = Fe(II)-heme o + diphosphate. The protein operates within porphyrin-containing compound metabolism; heme O biosynthesis; heme O from protoheme: step 1/1. In terms of biological role, converts heme B (protoheme IX) to heme O by substitution of the vinyl group on carbon 2 of heme B porphyrin ring with a hydroxyethyl farnesyl side group. The sequence is that of Protoheme IX farnesyltransferase from Pseudomonas savastanoi pv. phaseolicola (strain 1448A / Race 6) (Pseudomonas syringae pv. phaseolicola (strain 1448A / Race 6)).